A 359-amino-acid chain; its full sequence is 3-dehydroquinate synthase (359 aa).

Residues 71–76, 105–109, 129–130, Lys142, Lys151, and 169–172 each bind NAD(+); these read DGEQYK, GVIGD, TT, and CLKT. Zn(2+) contacts are provided by Glu184, His247, and His264.

The protein belongs to the sugar phosphate cyclases superfamily. Dehydroquinate synthase family. Co(2+) is required as a cofactor. The cofactor is Zn(2+). Requires NAD(+) as cofactor.

The protein localises to the cytoplasm. It carries out the reaction 7-phospho-2-dehydro-3-deoxy-D-arabino-heptonate = 3-dehydroquinate + phosphate. Its pathway is metabolic intermediate biosynthesis; chorismate biosynthesis; chorismate from D-erythrose 4-phosphate and phosphoenolpyruvate: step 2/7. Catalyzes the conversion of 3-deoxy-D-arabino-heptulosonate 7-phosphate (DAHP) to dehydroquinate (DHQ). The polypeptide is 3-dehydroquinate synthase (Shewanella amazonensis (strain ATCC BAA-1098 / SB2B)).